A 225-amino-acid chain; its full sequence is MKIVVPVMPRSLEEAQEIDLSKFDSVDIIEWRADALPKDDIINVAPAIFEKFAGHEIIFTLRTTREGGNIVLSDAEYVELIQKINSIYNPDYIDFEYFSHKEVFQEMLEFPNLVLSYHNFQETPENIMEIFSELTALAPRVVKIAVMPKNEQDVLDVMNYTRGFKTINPDQVYATVSMSKIGRISRFAGDVTGSSWTFAYLDSSIAPGQITISEMKRVKALLDAD.

Residues 30–32 (EWR) and Arg-62 contribute to the 3-dehydroquinate site. The Proton donor/acceptor role is filled by His-118. Lys-143 functions as the Schiff-base intermediate with substrate in the catalytic mechanism. Residues Arg-186 and Gln-209 each coordinate 3-dehydroquinate.

The protein belongs to the type-I 3-dehydroquinase family. Homodimer.

It catalyses the reaction 3-dehydroquinate = 3-dehydroshikimate + H2O. It functions in the pathway metabolic intermediate biosynthesis; chorismate biosynthesis; chorismate from D-erythrose 4-phosphate and phosphoenolpyruvate: step 3/7. Functionally, involved in the third step of the chorismate pathway, which leads to the biosynthesis of aromatic amino acids. Catalyzes the cis-dehydration of 3-dehydroquinate (DHQ) and introduces the first double bond of the aromatic ring to yield 3-dehydroshikimate. The polypeptide is 3-dehydroquinate dehydratase (Streptococcus agalactiae serotype Ia (strain ATCC 27591 / A909 / CDC SS700)).